A 93-amino-acid polypeptide reads, in one-letter code: Small ribosomal subunit protein uS19 (93 aa).

This sequence belongs to the universal ribosomal protein uS19 family.

Functionally, protein S19 forms a complex with S13 that binds strongly to the 16S ribosomal RNA. The sequence is that of Small ribosomal subunit protein uS19 from Oenococcus oeni (strain ATCC BAA-331 / PSU-1).